Here is a 142-residue protein sequence, read N- to C-terminus: Small heat shock protein IbpB (142 aa).

The sHSP domain occupies 26-137 (SGESQSFPPY…APQRIAINER (112 aa)).

Belongs to the small heat shock protein (HSP20) family. As to quaternary structure, homodimer. Forms homomultimers of about 100-150 subunits at optimal growth temperatures. Conformation changes to oligomers at high temperatures or high ionic concentrations. The decrease in size of the multimers is accompanied by an increase in chaperone activity.

It is found in the cytoplasm. Its function is as follows. Associates with aggregated proteins, together with IbpA, to stabilize and protect them from irreversible denaturation and extensive proteolysis during heat shock and oxidative stress. Aggregated proteins bound to the IbpAB complex are more efficiently refolded and reactivated by the ATP-dependent chaperone systems ClpB and DnaK/DnaJ/GrpE. Its activity is ATP-independent. The polypeptide is Small heat shock protein IbpB (Salmonella newport (strain SL254)).